Reading from the N-terminus, the 310-residue chain is D-erythrulose 1-phosphate 3-epimerase (310 aa).

The catalysed reaction is D-erythrulose 1-phosphate = L-erythrulose 1-phosphate. It participates in carbohydrate metabolism; erythritol degradation. Functionally, catalyzes the racemization of D-erythrulose 1-phosphate to L-erythrulose 1-phosphate. The sequence is that of D-erythrulose 1-phosphate 3-epimerase from Brucella abortus (strain 2308).